Consider the following 963-residue polypeptide: VPS35 endosomal protein-sorting factor-like (963 aa).

The segment at 43 to 112 (SKTKKVSRKG…DKDENSFVGP (70 aa)) is disordered. A compositionally biased stretch (low complexity) spans 51-72 (KGSTSSTSSSSSSSVIDPLSSV). Ser-265 carries the post-translational modification Phosphoserine. Residues 699-719 (AFVRACVAYCFITIPSLVGIF) form a helical membrane-spanning segment.

Belongs to the VPS35L family. As to quaternary structure, component of the heterotrimeric retriever complex formed by VPS26C, VPS29 and VPS35L. Interacts with VPS29. Interacts with COMMD1, CCDC93 and CCDC22; associates with the CCC (COMMD/CCDC22/CCDC93) complex which contains at least COMMD1 (and possibly other COMM domain-containing proteins), CCDC22 and CCDC93. Interacts with WASHC1, WASHC2A and WASHC2C. Interacts with SNX17 and SNX31.

It localises to the membrane. The protein resides in the endosome. Its function is as follows. Acts as a component of the retriever complex. The retriever complex is a heterotrimeric complex related to retromer cargo-selective complex (CSC) and essential for retromer-independent retrieval and recycling of numerous cargos such as integrin alpha-5/beta-1 (ITGA5:ITGB1). The recruitment of the retriever complex to the endosomal membrane involves CCC and WASH complexes. In the endosomes, drives the retrieval and recycling of NxxY-motif-containing cargo proteins by coupling to SNX17, a cargo essential for the homeostatic maintenance of numerous cell surface proteins associated with processes that include cell migration, cell adhesion, nutrient supply and cell signaling. Involved in copper-dependent ATP7A trafficking between the trans-Golgi network and vesicles in the cell periphery; the function is proposed to depend on its association with the CCC complex and cooperation with the WASH complex on early endosomes. Seems not to be required for CCC complex stability. The protein is VPS35 endosomal protein-sorting factor-like of Mus musculus (Mouse).